Here is a 506-residue protein sequence, read N- to C-terminus: Histidine ammonia-lyase (506 aa).

The 5-imidazolinone (Ala-Gly) cross-link spans 143 to 145 (ASG). Serine 144 is subject to 2,3-didehydroalanine (Ser).

The protein belongs to the PAL/histidase family. In terms of processing, contains an active site 4-methylidene-imidazol-5-one (MIO), which is formed autocatalytically by cyclization and dehydration of residues Ala-Ser-Gly.

Its subcellular location is the cytoplasm. It carries out the reaction L-histidine = trans-urocanate + NH4(+). The protein operates within amino-acid degradation; L-histidine degradation into L-glutamate; N-formimidoyl-L-glutamate from L-histidine: step 1/3. The polypeptide is Histidine ammonia-lyase (Salmonella dublin (strain CT_02021853)).